We begin with the raw amino-acid sequence, 310 residues long: Delta(1)-pyrroline-2-carboxylate reductase 1 (310 aa).

It belongs to the ornithine cyclodeaminase/mu-crystallin family.

The enzyme catalyses L-proline + NAD(+) = 1-pyrroline-2-carboxylate + NADH + H(+). It catalyses the reaction L-proline + NADP(+) = 1-pyrroline-2-carboxylate + NADPH + H(+). Its function is as follows. Catalyzes the reduction of Delta(1)-pyrroline-2-carboxylate (Pyr2C) to L-proline, using NADPH as the electron donor. May be involved in a degradation pathway that converts trans-3-hydroxy-L-proline (t3LHyp) to L-proline. The chain is Delta(1)-pyrroline-2-carboxylate reductase 1 from Burkholderia multivorans (strain ATCC 17616 / 249).